Reading from the N-terminus, the 305-residue chain is Peroxidase A2 (305 aa).

Position 1 is a pyrrolidone carboxylic acid (glutamine 1). N-linked (GlcNAc...) asparagine glycosylation is found at asparagine 3 and asparagine 13. 4 cysteine pairs are disulfide-bonded: cysteine 11/cysteine 91, cysteine 44/cysteine 49, cysteine 97/cysteine 299, and cysteine 176/cysteine 208. Histidine 42 (proton acceptor) is an active-site residue. The Ca(2+) site is built by aspartate 43, valine 46, glycine 48, aspartate 50, and serine 52. A substrate-binding site is contributed by proline 139. The N-linked (GlcNAc...) asparagine glycan is linked to asparagine 147. Position 169 (histidine 169) interacts with heme b. Threonine 170 contributes to the Ca(2+) binding site. N-linked (GlcNAc...) asparagine glycosylation is found at asparagine 185, asparagine 197, and asparagine 211. Positions 221, 224, and 229 each coordinate Ca(2+). N-linked (GlcNAc...) asparagine glycosylation occurs at asparagine 267.

The protein belongs to the peroxidase family. Classical plant (class III) peroxidase subfamily. It depends on Ca(2+) as a cofactor. Heme b is required as a cofactor.

It catalyses the reaction 2 a phenolic donor + H2O2 = 2 a phenolic radical donor + 2 H2O. Its function is as follows. Removal of H(2)O(2), oxidation of toxic reductants, biosynthesis and degradation of lignin, suberization, auxin catabolism, response to environmental stresses such as wounding, pathogen attack and oxidative stress. These functions might be dependent on each isozyme/isoform in each plant tissue. This is Peroxidase A2 (HRPA2) from Armoracia rusticana (Horseradish).